The following is a 187-amino-acid chain: Large ribosomal subunit protein bL21 (187 aa).

Residues 157 to 187 (KVAKKAVKKTVKKATKTGAKKKAAKKTSKKA) are disordered.

This sequence belongs to the bacterial ribosomal protein bL21 family. As to quaternary structure, part of the 50S ribosomal subunit. Contacts protein L20.

This protein binds to 23S rRNA in the presence of protein L20. The polypeptide is Large ribosomal subunit protein bL21 (Bdellovibrio bacteriovorus (strain ATCC 15356 / DSM 50701 / NCIMB 9529 / HD100)).